A 1683-amino-acid polypeptide reads, in one-letter code: Phospholipase D1 (1683 aa).

Disordered regions lie at residues 1–150 (MSNV…AYTQ), 173–198 (LKSSVNSPTPAGSGHRHNQHQHQQVN), 259–289 (ILDITNSNHNHRGNNNNNTGENSDRRPSIPR), and 384–416 (VMEKKAENKPSSAASAPHTSENNNNDNGSNITS). At Ser2 the chain carries N-acetylserine. Residues Ser8 and Ser30 each carry the phosphoserine modification. Composition is skewed to basic and acidic residues over residues 20–34 (SVTEEVDRVNSRPDE), 63–82 (NGKEAERKHALPKSFVDRNL), and 90–112 (SLDHIMHSNEHDPRRGSDEENMH). The segment covering 116–125 (NNLHSSNNNV) has biased composition (low complexity). The segment covering 141–150 (RRSSSVAYTQ) has biased composition (polar residues). Phosphoserine is present on Ser145. Residues 263-279 (TNSNHNHRGNNNNNTGE) show a composition bias toward low complexity. The PX domain maps to 291 to 487 (SSIISISSNV…EFYELSPLGN (197 aa)). Polar residues predominate over residues 392-404 (KPSSAASAPHTSE). The span at 405-416 (NNNNDNGSNITS) shows a compositional bias: low complexity. Residues 496-664 (QGKQGYLVIR…SSIIKMSTST (169 aa)) enclose the PH domain. PLD phosphodiesterase domains lie at 791–818 (YFWAHHEKFVVIDETFAFIGGTDLCYGR) and 1091–1118 (EQLYVHAKILIADDRRCIIGSANINERS). Residues His796, Lys798, Asp803, His1096, Lys1098, and Asp1103 contribute to the active site. Positions 1430 to 1465 (KDMRRHLSSSTESTRNGSNSLPLNEKSNEGESTNVD) are disordered. Over residues 1437-1451 (SSSTESTRNGSNSLP) the composition is skewed to polar residues. Residue Ser1461 is modified to Phosphoserine. Thr1462 carries the post-translational modification Phosphothreonine.

Belongs to the phospholipase D family. As to quaternary structure, interacts with SRF1.

It carries out the reaction a 1,2-diacyl-sn-glycero-3-phosphocholine + H2O = a 1,2-diacyl-sn-glycero-3-phosphate + choline + H(+). Activity is dependent of phosphatidylinositol 4,5-bisphosphate and the regulator SRF1. Inhibited by magnesium. Functionally, required for meiosis and spore formation. Seems to be involved in the coordinate induction of late meiotic events. PLD activity is induced under sporulation conditions and seems to be necessary to complete the meiotic cycle, but not for vegetative cell growth. The chain is Phospholipase D1 (SPO14) from Saccharomyces cerevisiae (strain ATCC 204508 / S288c) (Baker's yeast).